Reading from the N-terminus, the 111-residue chain is Cytochrome c (111 aa).

At alanine 1 the chain carries N-acetylalanine. Cysteine 22, cysteine 25, and histidine 26 together coordinate heme c. The residue at position 80 (lysine 80) is an N6,N6,N6-trimethyllysine. A heme c-binding site is contributed by methionine 88. Lysine 94 is modified (N6,N6,N6-trimethyllysine).

This sequence belongs to the cytochrome c family. Binds 1 heme c group covalently per subunit.

It localises to the mitochondrion intermembrane space. Electron carrier protein. The oxidized form of the cytochrome c heme group can accept an electron from the heme group of the cytochrome c1 subunit of cytochrome reductase. Cytochrome c then transfers this electron to the cytochrome oxidase complex, the final protein carrier in the mitochondrial electron-transport chain. This is Cytochrome c from Guizotia abyssinica (Niger).